The chain runs to 223 residues: MEQNFARMIDHTLLKAEATKEQIEKLCAEAKQFNFASVCVNPTWVKHSSELLQGSDVLVCTVIGFPLGANTPAVKAFEVKDAIANGANEVDMVINIGALKDKNYDLVQADIAAVVQAAKGSALVKVIIESCLLTDEEKVKACELAVAAGADYVKTSTGFSTGGATAADIALMRKTVGPELGVKASGGVRSLEDMKSMVEAGATRIGASSGVAIMNGLIADSNY.

Aspartate 91 acts as the Proton donor/acceptor in catalysis. Residue lysine 154 is the Schiff-base intermediate with acetaldehyde of the active site. Lysine 183 acts as the Proton donor/acceptor in catalysis.

It belongs to the DeoC/FbaB aldolase family. DeoC type 1 subfamily.

It is found in the cytoplasm. It carries out the reaction 2-deoxy-D-ribose 5-phosphate = D-glyceraldehyde 3-phosphate + acetaldehyde. The protein operates within carbohydrate degradation; 2-deoxy-D-ribose 1-phosphate degradation; D-glyceraldehyde 3-phosphate and acetaldehyde from 2-deoxy-alpha-D-ribose 1-phosphate: step 2/2. Its function is as follows. Catalyzes a reversible aldol reaction between acetaldehyde and D-glyceraldehyde 3-phosphate to generate 2-deoxy-D-ribose 5-phosphate. This Lysinibacillus sphaericus (strain C3-41) protein is Deoxyribose-phosphate aldolase.